Here is a 251-residue protein sequence, read N- to C-terminus: Indole-3-glycerol phosphate synthase (251 aa).

Residues 1-12 (MDDSSSLASPVQ) show a composition bias toward polar residues. Residues 1-27 (MDDSSSLASPVQSILAAARRRDPPTRR) form a disordered region.

The protein belongs to the TrpC family.

The enzyme catalyses 1-(2-carboxyphenylamino)-1-deoxy-D-ribulose 5-phosphate + H(+) = (1S,2R)-1-C-(indol-3-yl)glycerol 3-phosphate + CO2 + H2O. The protein operates within amino-acid biosynthesis; L-tryptophan biosynthesis; L-tryptophan from chorismate: step 4/5. This Halobacterium salinarum (strain ATCC 700922 / JCM 11081 / NRC-1) (Halobacterium halobium) protein is Indole-3-glycerol phosphate synthase.